The sequence spans 838 residues: DNA gyrase subunit A (838 aa).

In terms of domain architecture, Topo IIA-type catalytic spans 41–510; that stretch reads LPEVRDGLKP…ADGDVSDEDL (470 aa). The active-site O-(5'-phospho-DNA)-tyrosine intermediate is Y129. The GyrA-box signature appears at 537-543; sequence QKRGGKG.

It belongs to the type II topoisomerase GyrA/ParC subunit family. In terms of assembly, heterotetramer, composed of two GyrA and two GyrB chains. In the heterotetramer, GyrA contains the active site tyrosine that forms a transient covalent intermediate with DNA, while GyrB binds cofactors and catalyzes ATP hydrolysis. Mg(2+) is required as a cofactor.

Its subcellular location is the cytoplasm. It carries out the reaction ATP-dependent breakage, passage and rejoining of double-stranded DNA.. DNA supercoiling is inhibited by EDTA, novobiocin, coumermycin and ciprofloxacin. Functionally, a type II topoisomerase that negatively supercoils closed circular double-stranded (ds) DNA in an ATP-dependent manner to modulate DNA topology and maintain chromosomes in an underwound state. Also catalyzes the interconversion of other topological isomers of double-stranded DNA rings, including catenanes and knotted rings. Relaxes negatively supercoiled DNA in an ATP-independent manner. A linear reaction intermediate can be trapped in the presence of the antibiotic ciprofloxacin. Negative supercoiling favors strand separation, and DNA replication, transcription, recombination and repair, all of which involve strand separation. Type II topoisomerases break and join 2 DNA strands simultaneously in an ATP-dependent manner. The protein is DNA gyrase subunit A of Mycobacterium bovis (strain BCG / Pasteur 1173P2).